The sequence spans 432 residues: Adenylosuccinate lyase (432 aa).

N(6)-(1,2-dicarboxyethyl)-AMP is bound by residues 4–5 (RY), 67–69 (RHD), and 93–94 (TS). His-141 serves as the catalytic Proton donor/acceptor. Gln-212 contributes to the N(6)-(1,2-dicarboxyethyl)-AMP binding site. The Proton donor/acceptor role is filled by Ser-262. N(6)-(1,2-dicarboxyethyl)-AMP is bound by residues Ser-263, 268 to 270 (KRN), Asn-276, and 307 to 311 (SAERI).

It belongs to the lyase 1 family. Adenylosuccinate lyase subfamily. In terms of assembly, homodimer and homotetramer. Residues from neighboring subunits contribute catalytic and substrate-binding residues to each active site.

It catalyses the reaction N(6)-(1,2-dicarboxyethyl)-AMP = fumarate + AMP. The enzyme catalyses (2S)-2-[5-amino-1-(5-phospho-beta-D-ribosyl)imidazole-4-carboxamido]succinate = 5-amino-1-(5-phospho-beta-D-ribosyl)imidazole-4-carboxamide + fumarate. The protein operates within purine metabolism; AMP biosynthesis via de novo pathway; AMP from IMP: step 2/2. It functions in the pathway purine metabolism; IMP biosynthesis via de novo pathway; 5-amino-1-(5-phospho-D-ribosyl)imidazole-4-carboxamide from 5-amino-1-(5-phospho-D-ribosyl)imidazole-4-carboxylate: step 2/2. Its function is as follows. Catalyzes two reactions in de novo purine nucleotide biosynthesis. Catalyzes the breakdown of 5-aminoimidazole- (N-succinylocarboxamide) ribotide (SAICAR or 2-[5-amino-1-(5-phospho-beta-D-ribosyl)imidazole-4-carboxamido]succinate) to 5-aminoimidazole-4-carboxamide ribotide (AICAR or 5-amino-1-(5-phospho-beta-D-ribosyl)imidazole-4-carboxamide) and fumarate, and of adenylosuccinate (ADS or N(6)-(1,2-dicarboxyethyl)-AMP) to adenosine monophosphate (AMP) and fumarate. This chain is Adenylosuccinate lyase (purB), found in Streptococcus mutans serotype c (strain ATCC 700610 / UA159).